Reading from the N-terminus, the 41-residue chain is Pi-stichotoxin-Hcr5a (41 aa).

3 disulfides stabilise this stretch: C4–C37, C6–C30, and C20–C38.

Belongs to the sea anemone type 3 (BDS) potassium channel toxin family.

The protein resides in the secreted. It localises to the nematocyst. Weakly inhibits human homomeric ASIC3 (IC(50)=5.5 uM). The chain is Pi-stichotoxin-Hcr5a from Radianthus crispa (Leathery sea anemone).